Consider the following 282-residue polypeptide: Polyamine aminopropyltransferase (282 aa).

The 229-residue stretch at 11–239 folds into the PABS domain; it reads IEWYPRGYGV…SPWSFLVGVK (229 aa). Glutamine 36 contacts S-methyl-5'-thioadenosine. The spermidine site is built by histidine 67 and aspartate 91. S-methyl-5'-thioadenosine contacts are provided by residues glutamate 111 and 142–143; that span reads DG. Aspartate 160 serves as the catalytic Proton acceptor. 160 to 163 lines the spermidine pocket; that stretch reads DSTD. Position 167 (proline 167) interacts with S-methyl-5'-thioadenosine.

This sequence belongs to the spermidine/spermine synthase family. As to quaternary structure, homodimer or homotetramer.

The protein resides in the cytoplasm. The enzyme catalyses S-adenosyl 3-(methylsulfanyl)propylamine + putrescine = S-methyl-5'-thioadenosine + spermidine + H(+). The protein operates within amine and polyamine biosynthesis; spermidine biosynthesis; spermidine from putrescine: step 1/1. Functionally, catalyzes the irreversible transfer of a propylamine group from the amino donor S-adenosylmethioninamine (decarboxy-AdoMet) to putrescine (1,4-diaminobutane) to yield spermidine. This is Polyamine aminopropyltransferase from Thermococcus onnurineus (strain NA1).